Reading from the N-terminus, the 74-residue chain is DUP240 protein DFP2 (74 aa).

It belongs to the DUP/COS family.

It localises to the cytoplasm. Its subcellular location is the membrane. This Saccharomyces cerevisiae (strain ATCC 204508 / S288c) (Baker's yeast) protein is DUP240 protein DFP2.